Reading from the N-terminus, the 2332-residue chain is Genome polyprotein (2332 aa).

The Peptidase C28 domain occupies 1 to 201 (MHTTDCFIAL…WKAMVQRKLK (201 aa)). The Cytoplasmic segment spans residues 1–1480 (MHTTDCFIAL…SFVKRAFKRL (1480 aa)). Residues Cys51, His148, and Asp163 each act as for leader protease activity in the active site. Disordered regions lie at residues 199-218 (KLKG…QSGN) and 238-265 (QLGD…NTQN). The N-myristoyl glycine; by host moiety is linked to residue Gly202. Composition is skewed to polar residues over residues 204–218 (GQSS…QSGN) and 238–251 (QLGD…SNEG). Residues 252–265 (STDTTSTHTTNTQN) are compositionally biased toward low complexity. Positions 789–797 (ALLRAATYY) are antigenic epitope. The short motif at 868–870 (RGD) is the Cell attachment site element. One can recognise an SF3 helicase domain in the interval 1189–1353 (NVHIANLCKV…DGYKINNKLD (165 aa)). 1217-1224 (GKSGQGKS) lines the ATP pocket. An intramembrane segment occupies 1481–1501 (KENFEIVALCLTLLANIVIMI). The Cytoplasmic segment spans residues 1502–2332 (RETRKRQKMV…RWVNAVCGDA (831 aa)). Basic and acidic residues-rich tracts occupy residues 1529–1538 (KTLDEAEKNP) and 1549–1563 (FRER…RDDV). The tract at residues 1529–1584 (KTLDEAEKNPLETSGASTVGFRERTLPGQKARDDVNSEPAQPAEEQPQAEGPYAGP) is disordered. Positions 1566–1578 (EPAQPAEEQPQAE) are enriched in low complexity. Tyr1581, Tyr1604, and Tyr1628 each carry O-(5'-phospho-RNA)-tyrosine. A Peptidase C3 domain is found at 1652-1848 (APPTDLQKMV…YCSCVSRSML (197 aa)). His1695 (for protease 3C activity; Proton donor/acceptor) is an active-site residue. Active-site for protease 3C activity residues include Asp1733 and Cys1812. Positions 1878–1886 (MRKTKLAPT) match the Nuclear localization signal motif. Residues 2096–2214 (RNVWDVDYSA…ASDYDLDFEA (119 aa)) enclose the RdRp catalytic domain. Catalysis depends on Asp2200, which acts as the For RdRp activity.

The protein belongs to the picornaviruses polyprotein family. Interacts with host ISG15. Capsid protein VP1: Interacts (via R-G-D motif) with host ITGAV/ITGB6. As to quaternary structure, interacts (via R-G-D motif) with host ITGAV/ITGB6. Interacts with host MAVS; this interaction inhibits binding of host TRAF3 to MAVS, thereby suppressing interferon-mediated responses. In terms of assembly, forms homooligomers. Homohexamer. Interacts with host VIM. Interacts with host BECN1. As to quaternary structure, interacts with host DCTN3. In terms of assembly, interacts with RNA-dependent RNA polymerase; this interaction allows 3B-1 to binds 2 polymerases and act as a primer. It also allows the recruitment of the RNA-dependent RNA polymerase to host membranes. Interacts with RNA-dependent RNA polymerase; this interaction allows 3B-2 to act as a primer. As to quaternary structure, interacts with RNA-dependent RNA polymerase; this interaction allows 3B-3 to act as a primer. In terms of assembly, interacts with 3B-1; this interaction allows 3B-1 to binds 2 polymerases and act as a primer. It also allows the recruitment of the RNA-dependent RNA polymerase to host membranes. Interacts with 3B-2; this interaction allows 3B-2 to act as a primer. Interacts with 3B-3; this interaction allows 3B-3 to act as a primer. Removes six residues from its own C-terminus, generating sLb(pro). Post-translationally, specific enzymatic cleavages in vivo by the viral proteases yield a variety of precursors and mature proteins. The polyprotein seems to be cotranslationally cleaved at the 2A/2B junction by a ribosomal skip from one codon to the next without formation of a peptide bond. This process would release the L-P1-2A peptide from the translational complex. In terms of processing, during virion maturation, immature virions are rendered infectious following cleavage of VP0 into VP4 and VP2. This maturation seems to be an autocatalytic event triggered by the presence of RNA in the capsid and is followed by a conformational change of the particle. Myristoylation is required during RNA encapsidation and formation of the mature virus particle. Post-translationally, uridylylated by the polymerase and covalently linked to the 5'-end of genomic RNA. These uridylylated forms act as a nucleotide-peptide primer for the polymerase.

The protein localises to the host nucleus. Its subcellular location is the host cytoplasm. It is found in the virion. It localises to the host endoplasmic reticulum membrane. The protein resides in the host cytoplasmic vesicle membrane. The enzyme catalyses Autocatalytically cleaves itself from the polyprotein of the foot-and-mouth disease virus by hydrolysis of a Lys-|-Gly bond, but then cleaves host cell initiation factor eIF-4G at bonds -Gly-|-Arg- and -Lys-|-Arg-.. It carries out the reaction a ribonucleoside 5'-triphosphate + H2O = a ribonucleoside 5'-diphosphate + phosphate + H(+). The catalysed reaction is RNA(n) + a ribonucleoside 5'-triphosphate = RNA(n+1) + diphosphate. It catalyses the reaction Selective cleavage of Gln-|-Gly bond in the poliovirus polyprotein. In other picornavirus reactions Glu may be substituted for Gln, and Ser or Thr for Gly.. In terms of biological role, autocatalytically cleaves itself from the polyprotein at the L/VP0 junction. Also cleaves the host translation initiation factors EIF4G1 and EIF4G3, in order to shut off the capped cellular mRNA transcription. Plays a role in counteracting host innate antiviral response using diverse mechanisms. Possesses a deubiquitinase activity acting on both 'Lys-48' and 'Lys-63'-linked polyubiquitin chains. In turn, inhibits the ubiquitination and subsequent activation of key signaling molecules of type I IFN response such as host RIGI, TBK1, TRAF3 and TRAF6. Inhibits host NF-kappa-B activity by inducing a decrease in RELA mRNA levels. Cleaves a peptide bond in the C-terminus of host ISG15, resulting in the damaging of this modifier that can no longer be attached to target proteins. Also cleaves host G3BP1 and G3BP2 in order to inhibit cytoplasmic stress granules assembly. Functionally, lies on the inner surface of the capsid shell. After binding to the host receptor, the capsid undergoes conformational changes. Capsid protein VP4 is released, capsid protein VP1 N-terminus is externalized, and together, they shape a pore in the host membrane through which the viral genome is translocated into the host cell cytoplasm. After genome has been released, the channel shrinks. Its function is as follows. Forms an icosahedral capsid of pseudo T=3 symmetry with capsid proteins VP1 and VP3. The capsid is composed of 60 copies of each capsid protein organized in the form of twelve pentamers and encloses the viral positive strand RNA genome. Upon acidifcation in the endosome, dissociates into pentamers. Forms an icosahedral capsid of pseudo T=3 symmetry with capsid proteins VP0 and VP3. The capsid is composed of 60 copies of each capsid protein organized in the form of twelve pentamers and encloses the viral positive strand RNA genome. Upon acidifcation in the endosome, dissociates into pentamers. In terms of biological role, forms an icosahedral capsid of pseudo T=3 symmetry with capsid proteins VP2 and VP3. The capsid is composed of 60 copies of each capsid protein organized in the form of twelve pentamers and encloses the viral positive strand RNA genome. Mediates cell entry by attachment to an integrin receptor, usually host ITGAV/ITGB6. In addition, targets host MAVS to suppress type I IFN pathway. Upon acidifcation in the endosome, dissociates into pentamers. Functionally, mediates self-processing of the polyprotein by a translational effect termed 'ribosome skipping'. Mechanistically, 2A-mediated cleavage occurs between the C-terminal glycine and the proline of the downstream protein 2B. In the case of foot-and-mouth disease virus, the 2A oligopeptide is post-translationally 'trimmed' from the C-terminus of the upstream protein 1D by 3C proteinase. Its function is as follows. Plays an essential role in the virus replication cycle by acting as a viroporin. Creates a pore in the host endoplasmic reticulum and as a consequence releases Ca2+ in the cytoplasm of infected cell. In turn, high levels of cytoplasmic calcium may trigger membrane trafficking and transport of viral ER-associated proteins to viroplasms, sites of viral genome replication. Associates with and induces structural rearrangements of intracellular membranes. Triggers host autophagy by interacting with host BECN1 and thereby promotes viral replication. Participates in viral replication and interacts with host DHX9. Displays RNA-binding, nucleotide binding and NTPase activities. May play a role in virion morphogenesis and viral RNA encapsidation by interacting with the capsid protein VP3. In terms of biological role, plays important roles in virus replication, virulence and host range. Cooperates with host DDX56 to inhibit IRF3 nuclear translocation and subsequent type I interferon production. Functionally, covalently linked to the 5'-end of both the positive-strand and negative-strand genomic RNAs. Acts as a genome-linked replication primer. Its function is as follows. Cysteine protease that generates mature viral proteins from the precursor polyprotein. In addition to its proteolytic activity, binds to viral RNA and thus influences viral genome replication. RNA and substrate bind cooperatively to the protease. RNA-directed RNA polymerase 3D-POL replicates genomic and antigenomic RNA by recognizing replications specific signals. Covalently attaches UMP to a tyrosine of VPg, which is used to prime RNA synthesis. The positive stranded RNA genome is first replicated at virus induced membranous vesicles, creating a dsRNA genomic replication form. This dsRNA is then used as template to synthesize positive stranded RNA genomes. ss(+)RNA genomes are either translated, replicated or encapsidated. The sequence is that of Genome polyprotein from Foot-and-mouth disease virus (isolate -/Germany/A5Westerwald/1951 serotype A) (FMDV).